Here is a 473-residue protein sequence, read N- to C-terminus: MGAVLGVFSLASWVPCLCSGASCLLCSCCPNSKNSTVTRLIYAFILLLSTVVSYIMQRKEMETYLKKIPGFCEGGFKIHEADINADKDCDVLVGYKAVYRISFAMAIFFFVFSLLMFKVKTSKDLRAAVHNGFWFFKIAALIGIMVGSFYIPGGYFSSVWFVVGMIGAALFILIQLVLLVDFAHSWNESWVNRMEEGNPRLWYAALLSFTSAFYILSIICVGLLYTYYTKPDGCTENKFFISINLILCVVASIISIHPKIQEHQPRSGLLQSSLITLYTMYLTWSAMSNEPDRSCNPNLMSFITRITAPTLAPGNSTAVVPTPTPPSKSGSLLDSDNFIGLFVFVLCLLYSSIRTSTNSQVDKLTLSGSDSVILGDTTTSGASDEEDGQPRRAVDNEKEGVQYSYSLFHLMLCLASLYIMMTLTSWYSPDAKFQSMTSKWPAVWVKISSSWVCLLLYVWTLVAPLVLTSRDFS.

Topologically, residues 1-96 (MGAVLGVFSL…KDCDVLVGYK (96 aa)) are extracellular. N-linked (GlcNAc...) asparagine glycosylation occurs at asparagine 34. Residues 97–117 (AVYRISFAMAIFFFVFSLLMF) traverse the membrane as a helical segment. Over 118-132 (KVKTSKDLRAAVHNG) the chain is Cytoplasmic. Residues 133 to 153 (FWFFKIAALIGIMVGSFYIPG) form a helical membrane-spanning segment. Topologically, residues 154 to 159 (GYFSSV) are extracellular. Residues 160-180 (WFVVGMIGAALFILIQLVLLV) form a helical membrane-spanning segment. The Cytoplasmic segment spans residues 181 to 203 (DFAHSWNESWVNRMEEGNPRLWY). A helical membrane pass occupies residues 204 to 224 (AALLSFTSAFYILSIICVGLL). The Extracellular portion of the chain corresponds to 225–239 (YTYYTKPDGCTENKF). A helical transmembrane segment spans residues 240–260 (FISINLILCVVASIISIHPKI). Residues 261–329 (QEHQPRSGLL…VPTPTPPSKS (69 aa)) are Cytoplasmic-facing. The helical transmembrane segment at 330-350 (GSLLDSDNFIGLFVFVLCLLY) threads the bilayer. The Extracellular portion of the chain corresponds to 351-406 (SSIRTSTNSQVDKLTLSGSDSVILGDTTTSGASDEEDGQPRRAVDNEKEGVQYSYS). Phosphoserine is present on serine 371. Residues 407–427 (LFHLMLCLASLYIMMTLTSWY) traverse the membrane as a helical segment. The Cytoplasmic segment spans residues 428 to 446 (SPDAKFQSMTSKWPAVWVK). The helical transmembrane segment at 447 to 467 (ISSSWVCLLLYVWTLVAPLVL) threads the bilayer. Residues 468 to 473 (TSRDFS) are Extracellular-facing.

Belongs to the TDE1 family. In terms of processing, N-glycosylated. In terms of tissue distribution, ubiquitous. Expression levels were increased fourfold to tenfold in lung tumor tissues compared with normal pulmonary tissues.

It localises to the cell membrane. The protein localises to the golgi apparatus membrane. Its subcellular location is the cytoplasm. The protein resides in the perinuclear region. It carries out the reaction a 1,2-diacyl-sn-glycero-3-phospho-L-serine(in) = a 1,2-diacyl-sn-glycero-3-phospho-L-serine(out). The catalysed reaction is a 1,2-diacyl-sn-glycero-3-phosphocholine(in) = a 1,2-diacyl-sn-glycero-3-phosphocholine(out). The enzyme catalyses a 1,2-diacyl-sn-glycero-3-phosphoethanolamine(in) = a 1,2-diacyl-sn-glycero-3-phosphoethanolamine(out). Its function is as follows. Restriction factor required to restrict infectivity of lentiviruses, such as HIV-1: acts by inhibiting an early step of viral infection. Impairs the penetration of the viral particle into the cytoplasm. Non-ATP-dependent, non-specific lipid transporter for phosphatidylserine, phosphatidylcholine, and phosphatidylethanolamine. Functions as a scramblase that flips lipids in both directions across the membrane. Phospholipid scrambling results in HIV-1 surface exposure of phosphatidylserine and loss of membrane asymmetry, which leads to changes in HIV-1 Env conformation and loss of infectivity. The polypeptide is Serine incorporator 3 (Homo sapiens (Human)).